The sequence spans 89 residues: Long neurotoxin homolog TA-bm16 (89 aa).

The N-terminal stretch at 1–21 is a signal peptide; that stretch reads MKTLLLTLVVVTIVCLDLGYT. Cystine bridges form between Cys-24/Cys-45, Cys-27/Cys-32, Cys-38/Cys-66, Cys-70/Cys-81, and Cys-82/Cys-87.

It belongs to the three-finger toxin family. Ancestral subfamily. Orphan group V sub-subfamily. In terms of tissue distribution, expressed by the venom gland.

The protein resides in the secreted. Exhibits M2 muscarinic acetylcholine receptor (CHRM2)-blocking activity, but has a weak binding activity toward nicotinic AChR. Moreover, it inhibits collagen-induced platelet aggregation. The polypeptide is Long neurotoxin homolog TA-bm16 (Bungarus multicinctus (Many-banded krait)).